The primary structure comprises 239 residues: MKFSTALSVALFALAKMVIADSEEFGLVSIRSGSDLQYLSVYSDNGTLKLGSGSGSFEATITDDGKLKFDDDKYAVVNEDGSFKEGSESDAATGFSIKDGHLNYKSSSGFYAIKDGSSYIFSSKQSDDATGVAIRPTSKSGSVAADFSPSDSSSSSSASASSASASSSTKHSSSIESVETSTTVETSSASSPTASVISQITDGQIQAPNTVYEQTENAGAKAAVGMGAGALAVAAAYLL.

The N-terminal stretch at 1–20 (MKFSTALSVALFALAKMVIA) is a signal peptide. Residues 131 to 196 (GVAIRPTSKS…SSASSPTASV (66 aa)) are disordered. The segment covering 142–196 (SVAADFSPSDSSSSSSASASSASASSSTKHSSSIESVETSTTVETSSASSPTASV) has biased composition (low complexity). The stretch at 194-212 (ASVISQITDGQIQAPNTVY) is one PIR1/2/3 repeat. Residue asparagine 217 is the site of GPI-anchor amidated asparagine attachment. Positions 218 to 239 (AGAKAAVGMGAGALAVAAAYLL) are cleaved as a propeptide — removed in mature form.

The protein belongs to the SRP1/TIP1 family. In terms of processing, extensively O-glycosylated. The GPI-anchor is attached to the protein in the endoplasmic reticulum and serves to target the protein to the cell surface. There, the glucosamine-inositol phospholipid moiety is cleaved off and the GPI-modified mannoprotein is covalently attached via its lipidless GPI glycan remnant to the 1,6-beta-glucan of the outer cell wall layer. Post-translationally, covalently linked to beta-1,3-glucan of the inner cell wall layer via an alkali-sensitive ester linkage between the gamma-carboxyl group of glutamic acids, arising from a specific glutamine within the PIR1/2/3 repeat, and hydroxyl groups of glucoses of beta-1,3-glucan chains. The alkali-sensitive linkage is induced by low pH.

It localises to the secreted. The protein localises to the cell wall. Its subcellular location is the membrane. Its function is as follows. Component of the cell wall. The polypeptide is Cell wall protein CWP1 (CWP1) (Saccharomyces cerevisiae (strain ATCC 204508 / S288c) (Baker's yeast)).